Consider the following 124-residue polypeptide: UPF0231 protein Sbal223_3655 (124 aa).

It belongs to the UPF0231 family.

This Shewanella baltica (strain OS223) protein is UPF0231 protein Sbal223_3655.